Consider the following 497-residue polypeptide: Lysine--tRNA ligase (497 aa).

Mg(2+) is bound by residues Glu406 and Glu413.

This sequence belongs to the class-II aminoacyl-tRNA synthetase family. In terms of assembly, homodimer. It depends on Mg(2+) as a cofactor.

It is found in the cytoplasm. It carries out the reaction tRNA(Lys) + L-lysine + ATP = L-lysyl-tRNA(Lys) + AMP + diphosphate. This is Lysine--tRNA ligase from Rhizobium leguminosarum bv. trifolii (strain WSM2304).